Here is a 282-residue protein sequence, read N- to C-terminus: E3 ubiquitin-protein ligase Siah1 (282 aa).

Positions 1-28 (MSRQTATALPTGTSKCPPSQRVPTLSGT) are disordered. Residues 41–76 (CPVCFDYVLPPILQCQSGHLVCSNCRPKLTCCPTCR) form an RING-type zinc finger. Residues 90-282 (VANSVLFPCK…LGINVTISMC (193 aa)) are SBD. The SIAH-type zinc finger occupies 93 to 153 (SVLFPCKYAS…VMPHLLHQHK (61 aa)). Residues Cys-98, Cys-105, His-117, Cys-121, Cys-128, Cys-135, His-147, and His-152 each coordinate Zn(2+).

Belongs to the SINA (Seven in absentia) family. In terms of assembly, homodimer.

It carries out the reaction S-ubiquitinyl-[E2 ubiquitin-conjugating enzyme]-L-cysteine + [acceptor protein]-L-lysine = [E2 ubiquitin-conjugating enzyme]-L-cysteine + N(6)-ubiquitinyl-[acceptor protein]-L-lysine.. It participates in protein modification; protein ubiquitination. Its function is as follows. E3 ubiquitin-protein ligase that mediates ubiquitination and subsequent proteasomal degradation of target proteins. E3 ubiquitin ligases accept ubiquitin from an E2 ubiquitin-conjugating enzyme in the form of a thioester and then directly transfers the ubiquitin to targeted substrates. It probably triggers the ubiquitin-mediated degradation of different substrates. The polypeptide is E3 ubiquitin-protein ligase Siah1 (siah1) (Danio rerio (Zebrafish)).